A 338-amino-acid polypeptide reads, in one-letter code: Solute carrier family 35 member B1 homolog (338 aa).

The next 9 membrane-spanning stretches (helical) occupy residues 9–29 (FVIY…VQEK), 53–73 (LALV…LLTI), 84–104 (GSYV…NMAM), 111–131 (TAVV…VLIG), 135–155 (YSWT…LFMY), 168–188 (TLLG…TGAV), 213–233 (LMLG…YFTI), 244–264 (LIAV…ASFG), and 284–304 (VLLF…LVFA). The Di-lysine motif motif lies at 334-338 (KKLNS).

It belongs to the nucleotide-sugar transporter family. SLC35B subfamily.

It localises to the endoplasmic reticulum membrane. Its function is as follows. Probable sugar transporter. The polypeptide is Solute carrier family 35 member B1 homolog (meigo) (Drosophila melanogaster (Fruit fly)).